Reading from the N-terminus, the 169-residue chain is Cell cycle link protein (169 aa).

Positions 9–22 (LPLELREKIVRDHL) are binding to host SKP1 protein. The LXCXE motif, interaction with host RBR signature appears at 110-114 (LSCGE).

Belongs to the nanovirus Clink protein family. In terms of assembly, interacts with host SKP1. Interacts (via LXCXE domain) with host retinoblastoma-related protein 1 (RBR1). Interacts (via LXCXE domain) with retinoblastoma-related proteins (RBR).

Functionally, interacts with and disrupts the function of host retinoblastoma-related proteins RBR, which are key regulators of the cell cycle. Induces transcriptional activation of E2F-regulated S-phase and G2/M-phase-specific genes. Inactivation of the ability of RBR to arrest the cell cycle leads to the stimulation of viral DNA replication. This Astragalus sinicus (Chinese milk vetch) protein is Cell cycle link protein (DNA-C).